We begin with the raw amino-acid sequence, 212 residues long: Ribosomal RNA small subunit methyltransferase G (212 aa).

S-adenosyl-L-methionine contacts are provided by residues G72, L77, 123 to 124 (VE), and R138.

It belongs to the methyltransferase superfamily. RNA methyltransferase RsmG family.

It is found in the cytoplasm. The catalysed reaction is guanosine(527) in 16S rRNA + S-adenosyl-L-methionine = N(7)-methylguanosine(527) in 16S rRNA + S-adenosyl-L-homocysteine. Functionally, specifically methylates the N7 position of guanine in position 527 of 16S rRNA. This is Ribosomal RNA small subunit methyltransferase G from Histophilus somni (strain 2336) (Haemophilus somnus).